A 388-amino-acid chain; its full sequence is F-box/LRR-repeat protein At3g59190 (388 aa).

The region spanning Lys-11–Pro-64 is the F-box domain. 5 LRR repeats span residues Lys-151–Ala-177, Phe-180–Lys-205, Cys-228–Asp-252, Thr-313–Thr-345, and Asp-346–Val-371.

This Arabidopsis thaliana (Mouse-ear cress) protein is F-box/LRR-repeat protein At3g59190.